We begin with the raw amino-acid sequence, 83 residues long: U4-theraphotoxin-Hhn1x (83 aa).

The first 20 residues, 1–20, serve as a signal peptide directing secretion; sequence MTLIAILTCAAALVLHTTAA. A propeptide spanning residues 21 to 46 is cleaved from the precursor; sequence EELEAESQLMEVGMPDTELEAVDEER. 3 disulfides stabilise this stretch: Cys50-Cys64, Cys54-Cys75, and Cys69-Cys80.

It belongs to the neurotoxin 12 (Hwtx-2) family. 02 (Hwtx-2) subfamily. As to expression, expressed by the venom gland.

The protein resides in the secreted. Functionally, postsynaptic neurotoxin. The chain is U4-theraphotoxin-Hhn1x from Cyriopagopus hainanus (Chinese bird spider).